Here is a 537-residue protein sequence, read N- to C-terminus: Phenylalanine--tRNA ligase beta subunit (537 aa).

Residues 268–343 form the B5 domain; the sequence is FNFRPYRLNL…KSYGIENVRE (76 aa). The Mg(2+) site is built by aspartate 321, aspartate 327, glutamate 330, and aspartate 331.

The protein belongs to the phenylalanyl-tRNA synthetase beta subunit family. Type 2 subfamily. In terms of assembly, tetramer of two alpha and two beta subunits. Requires Mg(2+) as cofactor.

It localises to the cytoplasm. The catalysed reaction is tRNA(Phe) + L-phenylalanine + ATP = L-phenylalanyl-tRNA(Phe) + AMP + diphosphate + H(+). The protein is Phenylalanine--tRNA ligase beta subunit of Thermoplasma volcanium (strain ATCC 51530 / DSM 4299 / JCM 9571 / NBRC 15438 / GSS1).